Consider the following 632-residue polypeptide: 1-deoxy-D-xylulose-5-phosphate synthase (632 aa).

Thiamine diphosphate is bound by residues histidine 87 and 128–130 (GHS). Aspartate 159 serves as a coordination point for Mg(2+). Residues 160-161 (GA), asparagine 188, phenylalanine 295, and glutamate 378 each bind thiamine diphosphate. Asparagine 188 is a binding site for Mg(2+).

This sequence belongs to the transketolase family. DXPS subfamily. Homodimer. The cofactor is Mg(2+). Requires thiamine diphosphate as cofactor.

The enzyme catalyses D-glyceraldehyde 3-phosphate + pyruvate + H(+) = 1-deoxy-D-xylulose 5-phosphate + CO2. It participates in metabolic intermediate biosynthesis; 1-deoxy-D-xylulose 5-phosphate biosynthesis; 1-deoxy-D-xylulose 5-phosphate from D-glyceraldehyde 3-phosphate and pyruvate: step 1/1. Functionally, catalyzes the acyloin condensation reaction between C atoms 2 and 3 of pyruvate and glyceraldehyde 3-phosphate to yield 1-deoxy-D-xylulose-5-phosphate (DXP). The polypeptide is 1-deoxy-D-xylulose-5-phosphate synthase (Pseudomonas fluorescens (strain SBW25)).